The sequence spans 343 residues: Inositol 2-dehydrogenase (343 aa).

Belongs to the Gfo/Idh/MocA family. As to quaternary structure, homotetramer.

The catalysed reaction is myo-inositol + NAD(+) = scyllo-inosose + NADH + H(+). In terms of biological role, involved in the oxidation of myo-inositol (MI) to 2-keto-myo-inositol (2KMI or 2-inosose). In Streptomyces avermitilis (strain ATCC 31267 / DSM 46492 / JCM 5070 / NBRC 14893 / NCIMB 12804 / NRRL 8165 / MA-4680), this protein is Inositol 2-dehydrogenase.